Consider the following 240-residue polypeptide: Ubiquinone biosynthesis O-methyltransferase (240 aa).

Arg-44, Gly-64, Asp-85, and Met-129 together coordinate S-adenosyl-L-methionine.

It belongs to the methyltransferase superfamily. UbiG/COQ3 family.

It catalyses the reaction a 3-demethylubiquinol + S-adenosyl-L-methionine = a ubiquinol + S-adenosyl-L-homocysteine + H(+). The catalysed reaction is a 3-(all-trans-polyprenyl)benzene-1,2-diol + S-adenosyl-L-methionine = a 2-methoxy-6-(all-trans-polyprenyl)phenol + S-adenosyl-L-homocysteine + H(+). The protein operates within cofactor biosynthesis; ubiquinone biosynthesis. O-methyltransferase that catalyzes the 2 O-methylation steps in the ubiquinone biosynthetic pathway. This Shigella flexneri serotype 5b (strain 8401) protein is Ubiquinone biosynthesis O-methyltransferase.